We begin with the raw amino-acid sequence, 336 residues long: NADH-quinone oxidoreductase subunit H (336 aa).

The next 8 helical transmembrane spans lie at 9 to 29 (LVWIVLLAIVLILCVAYLTYA), 77 to 97 (FLFAPVIIFVLALVGWAVIPF), 116 to 136 (LGVMYLLGVAALEVYGTIIAG), 156 to 176 (ISYEIVIAPVVMTVILLTGSL), 188 to 208 (LPYWVDILMLPMTFIFFVSIL), 236 to 256 (IPFALFFLGEYANMILSSSIM), 275 to 295 (IVPGFIWFILKIVFVLFCFLI), and 315 to 335 (VFLPVTLLWIVVIGGLVAFNI).

The protein belongs to the complex I subunit 1 family. NDH-1 is composed of 14 different subunits. Subunits NuoA, H, J, K, L, M, N constitute the membrane sector of the complex.

The protein resides in the cell inner membrane. The enzyme catalyses a quinone + NADH + 5 H(+)(in) = a quinol + NAD(+) + 4 H(+)(out). Its function is as follows. NDH-1 shuttles electrons from NADH, via FMN and iron-sulfur (Fe-S) centers, to quinones in the respiratory chain. The immediate electron acceptor for the enzyme in this species is believed to be ubiquinone. Couples the redox reaction to proton translocation (for every two electrons transferred, four hydrogen ions are translocated across the cytoplasmic membrane), and thus conserves the redox energy in a proton gradient. This subunit may bind ubiquinone. This chain is NADH-quinone oxidoreductase subunit H, found in Neorickettsia sennetsu (strain ATCC VR-367 / Miyayama) (Ehrlichia sennetsu).